Consider the following 188-residue polypeptide: dCTP deaminase (188 aa).

DCTP contacts are provided by residues 111 to 116, 135 to 137, Gln-156, Tyr-170, and Gln-180; these read KSTYAR and TLE. Glu-137 serves as the catalytic Proton donor/acceptor.

It belongs to the dCTP deaminase family. Homotrimer.

The catalysed reaction is dCTP + H2O + H(+) = dUTP + NH4(+). It participates in pyrimidine metabolism; dUMP biosynthesis; dUMP from dCTP (dUTP route): step 1/2. Functionally, catalyzes the deamination of dCTP to dUTP. This Pseudomonas fluorescens (strain SBW25) protein is dCTP deaminase.